The following is a 120-amino-acid chain: Transmembrane protein 010R (120 aa).

Transmembrane regions (helical) follow at residues 40–60 and 72–92; these read FCGA…ATAT and SIFF…VWFL.

It belongs to the IIV-6 010R family.

It is found in the membrane. The sequence is that of Transmembrane protein 010R from Invertebrate iridescent virus 6 (IIV-6).